A 502-amino-acid chain; its full sequence is MKIAVIGAGVTGLAAAARIASQGHEVTIFEKNNNVGGRMNQLKKDGFTFDMGPTIVMMPDVYKDVFTACGKNYEDYIELRQLRYIYDVYFDHDDRITVPTDLAELQQMLESIEPGSTHGFMSFLTDVYKKYEIARRYFLERTYRKPSDFYNMTSLVQGAKLKTLNHADQLIEHYIDNEKIQKLLAFQTLYIGIDPKRGPSLYSIIPMIEMMFGVHFIKGGMYGMAQGLAQLNKDLGVNIELNAEIEQIIIDPKFKRADAIKVNGDIRKFDKILCTADFPSVAESLMPDFAPIKKYPPHKIADLDYSCSAFLMYIGIDIDVTDQVRLHNVIFSDDFRGNIEEIFEGRLSYDPSIYVYVPAVADKSLAPEGKTGIYVLMPTPELKTGSGIDWSDEALTQQIKEIIYRKLATIEVFEDIKSHIVSETIFTPNDFEQTYHAKFGSAFGLMPTLAQSNYYRPQNVSRDYKDLYFAGASTHPGAGVPIVLTSAKITVDEMIKDIEQGV.

Valine 5 to alanine 17 contributes to the FAD binding site.

Belongs to the carotenoid/retinoid oxidoreductase family. CrtN subfamily.

The enzyme catalyses 15-cis-4,4'-diapophytoene + 3 FAD + 3 H(+) = all-trans-4,4'-diaponeurosporene + 3 FADH2. It functions in the pathway carotenoid biosynthesis; staphyloxanthin biosynthesis; staphyloxanthin from farnesyl diphosphate: step 2/5. Its function is as follows. Involved in the biosynthesis of the yellow-orange carotenoid staphyloxanthin, which plays a role in the virulence via its protective function against oxidative stress. Catalyzes three successive dehydrogenation reactions that lead to the introduction of three double bonds into 4,4'-diapophytoene (dehydrosqualene), with 4,4'-diapophytofluene and 4,4'-diapo-zeta-carotene as intermediates, and 4,4'-diaponeurosporene (the major deep-yellow pigment in staphylococci strains) as the end product. This chain is 4,4'-diapophytoene desaturase (4,4'-diaponeurosporene-forming), found in Staphylococcus aureus (strain MW2).